Reading from the N-terminus, the 92-residue chain is Large ribosomal subunit protein bL34m (92 aa).

The N-terminal 46 residues, 1 to 46, are a transit peptide targeting the mitochondrion; sequence MAFLARCFGCQACRSVALLSGRYLQSRVWMGLPDSWPLLSLQQARG. Ser71 is subject to Phosphoserine.

This sequence belongs to the bacterial ribosomal protein bL34 family. Component of the mitochondrial ribosome large subunit (39S) which comprises a 16S rRNA and about 50 distinct proteins.

It localises to the mitochondrion. This Mus musculus (Mouse) protein is Large ribosomal subunit protein bL34m (Mrpl34).